Consider the following 206-residue polypeptide: Small ribosomal subunit protein uS4 (206 aa).

A disordered region spans residues 23 to 47 (AKSPLNRREYGPGQHGQRRKGKLSD). Residues 94-157 (RRLDAVIYRA…RQLAIVLESV (64 aa)) enclose the S4 RNA-binding domain.

Belongs to the universal ribosomal protein uS4 family. As to quaternary structure, part of the 30S ribosomal subunit. Contacts protein S5. The interaction surface between S4 and S5 is involved in control of translational fidelity.

In terms of biological role, one of the primary rRNA binding proteins, it binds directly to 16S rRNA where it nucleates assembly of the body of the 30S subunit. Its function is as follows. With S5 and S12 plays an important role in translational accuracy. This chain is Small ribosomal subunit protein uS4, found in Paracoccus denitrificans (strain Pd 1222).